The primary structure comprises 159 residues: Neuroglobin-2 (159 aa).

The 149-residue stretch at 3-151 (KLTEKDKELI…VVAAMSRGWA (149 aa)) folds into the Globin domain. Residues His66 and His98 each coordinate heme b.

This sequence belongs to the globin family. In terms of assembly, monomer. Homodimers and homotetramers. Mainly monomeric but also detected as part of homodimers and homotetramers.

The protein resides in the cytoplasm. It localises to the cytosol. Its subcellular location is the mitochondrion matrix. The enzyme catalyses Fe(III)-heme b-[protein] + nitric oxide + H2O = Fe(II)-heme b-[protein] + nitrite + 2 H(+). In terms of biological role, monomeric globin with a bis-histidyl six-coordinate heme-iron atom through which it can bind dioxygen, carbon monoxide and nitric oxide. Could help transport oxygen and increase its availability to the metabolically active neuronal tissues, though its low quantity in tissues as well as its high affinity for dioxygen, which may limit its oxygen-releasing ability, argue against it. The ferrous/deoxygenated form exhibits a nitrite reductase activity and it could produce nitric oxide which in turn inhibits cellular respiration in response to hypoxia. In its ferrous/deoxygenated state, it may also exhibit GDI (Guanine nucleotide Dissociation Inhibitor) activity toward heterotrimeric G-alpha proteins, thereby regulating signal transduction to facilitate neuroprotective responses in the wake of hypoxia and associated oxidative stress. This chain is Neuroglobin-2 (ngb2), found in Oncorhynchus mykiss (Rainbow trout).